Consider the following 270-residue polypeptide: Proteasome subunit beta (270 aa).

Residues 1-47 constitute a propeptide, removed in mature form; by autocatalysis; the sequence is MSNRGRLGDAFLRPGSSSFLDFLSDHAPELLPGRSAAAGNAPLAPHA. Threonine 48 (nucleophile) is an active-site residue.

It belongs to the peptidase T1B family. The 20S proteasome core is composed of 14 alpha and 14 beta subunits that assemble into four stacked heptameric rings, resulting in a barrel-shaped structure. The two inner rings, each composed of seven catalytic beta subunits, are sandwiched by two outer rings, each composed of seven alpha subunits. The catalytic chamber with the active sites is on the inside of the barrel. Has a gated structure, the ends of the cylinder being occluded by the N-termini of the alpha-subunits. Is capped by the proteasome-associated ATPase, ARC.

Its subcellular location is the cytoplasm. The enzyme catalyses Cleavage of peptide bonds with very broad specificity.. It functions in the pathway protein degradation; proteasomal Pup-dependent pathway. With respect to regulation, the formation of the proteasomal ATPase ARC-20S proteasome complex, likely via the docking of the C-termini of ARC into the intersubunit pockets in the alpha-rings, may trigger opening of the gate for substrate entry. Interconversion between the open-gate and close-gate conformations leads to a dynamic regulation of the 20S proteasome proteolysis activity. Component of the proteasome core, a large protease complex with broad specificity involved in protein degradation. This Xylanimonas cellulosilytica (strain DSM 15894 / JCM 12276 / CECT 5975 / KCTC 9989 / LMG 20990 / NBRC 107835 / XIL07) protein is Proteasome subunit beta.